A 175-amino-acid chain; its full sequence is Movement protein (175 aa).

A homodimerization region spans residues 30–47 (ADLDDDEEVTTGQEELFL). An RNA-binding region spans residues 50–156 (EQVRARHLFS…QRLTSTERNG (107 aa)). 2 positions are modified to phosphoserine: Ser-64 and Ser-133. 2 stretches are compositionally biased toward polar residues: residues 116–141 (SLTS…SQSP) and 148–169 (RLTS…SSTK). The disordered stretch occupies residues 116-175 (SLTSWTHTVNSTPFPQLSTSSGSQSPGKGRLQRLTSTERNGTTLPRTNSGSSTKAMVLHR).

The protein belongs to the polerovirus movement protein family. As to quaternary structure, homodimer. Post-translationally, phosphorylated.

The protein localises to the host cell junction. The protein resides in the host plasmodesma. It is found in the host Golgi apparatus. Functionally, together with movement protein P3a, facilitates long-distance movement of virions in host. Transports viral genome to neighboring plant cells directly through plasmosdesmata, without any budding. The movement protein allows efficient cell to cell propagation, by bypassing the host cell wall barrier. Binds ssRNA. The polypeptide is Movement protein (Turnip yellows virus (isolate FL-1) (TuYV)).